A 54-amino-acid chain; its full sequence is Photosystem II reaction center protein L (54 aa).

A helical transmembrane segment spans residues 33–53 (SLFWGLLLIFVLAVLFSSYIF).

The protein belongs to the PsbL family. As to quaternary structure, PSII is composed of 1 copy each of membrane proteins PsbA, PsbB, PsbC, PsbD, PsbE, PsbF, PsbH, PsbI, PsbJ, PsbK, PsbL, PsbM, PsbT, PsbX, PsbY, PsbZ, Psb30/Ycf12, at least 3 peripheral proteins of the oxygen-evolving complex and a large number of cofactors. It forms dimeric complexes.

It localises to the plastid. The protein localises to the chloroplast thylakoid membrane. Its function is as follows. One of the components of the core complex of photosystem II (PSII). PSII is a light-driven water:plastoquinone oxidoreductase that uses light energy to abstract electrons from H(2)O, generating O(2) and a proton gradient subsequently used for ATP formation. It consists of a core antenna complex that captures photons, and an electron transfer chain that converts photonic excitation into a charge separation. This subunit is found at the monomer-monomer interface and is required for correct PSII assembly and/or dimerization. The polypeptide is Photosystem II reaction center protein L (Stigeoclonium helveticum (Green alga)).